Here is a 222-residue protein sequence, read N- to C-terminus: uncharacterized protein (222 aa).

The next 4 membrane-spanning stretches (helical) occupy residues 25 to 45 (LLWLFFTLLGLGVFGIMPATA), 80 to 100 (LLGAVLALIGVIIYIDLALIY), 111 to 131 (FAIMIFGFLFVSMLFYVFPLL), and 160 to 180 (LALTVALFFLLAYLPGIVPFF).

The protein localises to the cell membrane. This is an uncharacterized protein from Bacillus subtilis (strain 168).